Reading from the N-terminus, the 815-residue chain is Phosphate transporter PHO1-2 (815 aa).

At 1–421 (MVKFSREYEA…QQPRNTHMIT (421 aa)) the chain is on the cytoplasmic side. The SPX domain maps to 2–368 (VKFSREYEAS…EQQRATDLFS (367 aa)). Disordered stretches follow at residues 83–108 (SAGQ…STDK), 166–213 (RGLA…LELQ), and 242–266 (AGKK…GGGG). Positions 97–108 (PDRGELVRSTDK) are enriched in basic and acidic residues. Over residues 183–201 (PPSSVHGSSGRYLLSGLSS) the composition is skewed to low complexity. Polar residues predominate over residues 202-213 (PQSMSDGSLELQ). Residues 243-254 (GKKDGKTKDGSG) show a composition bias toward basic and acidic residues. Positions 255–266 (KGRGGGGGGGGG) are enriched in gly residues. Residues 422–442 (FLVGLFTGTFVSLFIIYAILA) traverse the membrane as a helical segment. Over 443 to 458 (HVSGIFTSTGNSAYME) the chain is Extracellular. The helical transmembrane segment at 459-479 (IVYHVFSMFALISLHIFLYGC) threads the bilayer. Over 480 to 508 (NLFMWKNTRINHNFIFDFSSNTALTHRDA) the chain is Cytoplasmic. The helical transmembrane segment at 509–529 (FLMSASIMCTVVAALVINLFL) threads the bilayer. Residues 530 to 538 (KNAGVAYAN) are Extracellular-facing. A helical membrane pass occupies residues 539-559 (ALPGALLLLSTGVLFCPFDIF). Topologically, residues 560 to 686 (YRSTRYCFMR…VRFKYAATPT (127 aa)) are cytoplasmic. Residues 624–815 (TSGQQYKHLA…PLPFRELETD (192 aa)) enclose the EXS domain. Residues 687-707 (PFWVWMVIISSSGATIYQLYW) form a helical membrane-spanning segment. Residues 708 to 734 (DFVKDWGFLNPKSKNRWLRNELILKNK) lie on the Extracellular side of the membrane. Residues 735–751 (SIYYVSMMLNLALRLAW) traverse the membrane as a helical segment. Over 752–815 (TESVMKIHIG…PLPFRELETD (64 aa)) the chain is Cytoplasmic.

Belongs to the SYG1 (TC 2.A.94) family. In terms of tissue distribution, specifically expressed in roots.

The protein localises to the cell membrane. Involved in the transfer of inorganic phosphate (Pi) from roots to shoots. The chain is Phosphate transporter PHO1-2 (PHO1-2) from Oryza sativa subsp. japonica (Rice).